Consider the following 66-residue polypeptide: Beta-toxin Cbo1 (66 aa).

Positions 1-66 constitute an LCN-type CS-alpha/beta domain; sequence KEGYLVNHST…VWPLPKKTCN (66 aa). 4 disulfide bridges follow: C12–C65, C16–C41, C25–C46, and C29–C48. Asparagine amide is present on N66.

This sequence belongs to the long (4 C-C) scorpion toxin superfamily. Sodium channel inhibitor family. Beta subfamily. In terms of tissue distribution, expressed by the venom gland.

The protein localises to the secreted. Beta toxins bind voltage-independently at site-4 of sodium channels and shift the voltage of activation toward more negative potentials thereby affecting sodium channel activation and promoting spontaneous and repetitive firing. Is active on the human voltage-gated sodium channel Nav1.6/SCN8A when tested at 200 nM. In vivo, is toxic to mice when intraperitoneally injected. The chain is Beta-toxin Cbo1 from Centruroides bonito (Scorpion).